The sequence spans 677 residues: Mitochondrial 15S rRNA processing factor ppr3 (677 aa).

The transit peptide at methionine 1–leucine 43 directs the protein to the mitochondrion. PPR repeat units follow at residues serine 210 to proline 244, aspartate 245 to alanine 279, asparagine 280 to serine 314, aspartate 317 to proline 351, serine 355 to proline 390, and aspartate 569 to proline 604.

This sequence belongs to the CCM1 family. In terms of assembly, binds to mitochondrial small subunit 15S rRNA.

The protein resides in the mitochondrion. In terms of biological role, regulates mitochondrial small subunit maturation by controlling 15S rRNA 5'-end processing. Localizes to the 5' precursor of the 15S rRNA in a position that is subsequently occupied by mS47 in the mature yeast mtSSU. Uses structure and sequence-specific RNA recognition, binding to a single-stranded region of the precursor and specifically recognizing bases -6 to -1. The exchange of Ccm1 for mS47 is coupled to the irreversible removal of precursor rRNA that is accompanied by conformational changes of the mitoribosomal proteins uS5m and mS26. These conformational changes signal completion of 5'-end rRNA processing through protection of the mature 5'-end of the 15S rRNA and stabilization of mS47. The removal of the 5' precursor together with the dissociation of Ccm1 may be catalyzed by the 5'-3' exoribonuclease Pet127. Involved in the specific removal of group I introns in mitochondrial encoded transcripts. The protein is Mitochondrial 15S rRNA processing factor ppr3 (dmr1) of Schizosaccharomyces japonicus (strain yFS275 / FY16936) (Fission yeast).